A 364-amino-acid polypeptide reads, in one-letter code: MNFTVGFKPLLGDAHNMDNLEKQLICPICLEMFSKPVVILPCQHNLCRKCANDVFQASNPLWQSRGSTTVSSGGRFRCPSCRHEVVLDRHGVYGLQRNLLVENIIDIYKQESSRPLHSKAEQHLMCEEHEDEKINIYCLSCEVPTCSLCKVFGAHKDCEVAPLPTIYKRQKSELSDGIAMLVAGNDRVQAVITQMEEVCQTIEDNSRRQKQLLNQKFETLCAVLEERKGELLQALARVQEEKLQRVRSLIRQYGDHLEASSKLVESAIQSMEEPQMALYLQQAKELINKVGAMSKVELAGRPEPGYESMEQFSVIVEHVAEMLRTIDFQPGASGDEEDDEVTLDGEEGNTGLEEERLDGPEGLH.

The RING-type zinc finger occupies 26-82; that stretch reads CPICLEMFSKPVVILPCQHNLCRKCANDVFQASNPLWQSRGSTTVSSGGRFRCPSCR. Residues 121 to 163 form a B box-type zinc finger; sequence EQHLMCEEHEDEKINIYCLSCEVPTCSLCKVFGAHKDCEVAPL. Cys126, His129, Cys149, and His155 together coordinate Zn(2+). Residues 168–211 are mediates microtubule-binding and homooligomerization; the sequence is KRQKSELSDGIAMLVAGNDRVQAVITQMEEVCQTIEDNSRRQKQ. A coiled-coil region spans residues 194 to 252; the sequence is QMEEVCQTIEDNSRRQKQLLNQKFETLCAVLEERKGELLQALARVQEEKLQRVRSLIRQ. In terms of domain architecture, COS spans 271 to 329; it reads MEEPQMALYLQQAKELINKVGAMSKVELAGRPEPGYESMEQFSVIVEHVAEMLRTIDFQ. Residues 328–364 are disordered; it reads FQPGASGDEEDDEVTLDGEEGNTGLEEERLDGPEGLH. Positions 334-347 are enriched in acidic residues; that stretch reads GDEEDDEVTLDGEE. The span at 353 to 364 shows a compositional bias: basic and acidic residues; the sequence is EEERLDGPEGLH.

Homooligomer and heterooligomer. Interacts with TRIM63 and probably with TRIM55. Interacts with tubulin.

The protein resides in the cytoplasm. It localises to the cytoskeleton. It is found in the myofibril. Its subcellular location is the sarcomere. The protein localises to the z line. May bind and stabilize microtubules during myotubes formation. The polypeptide is Tripartite motif-containing protein 54 (Trim54) (Rattus norvegicus (Rat)).